We begin with the raw amino-acid sequence, 223 residues long: DNA mismatch repair protein MutH (223 aa).

It belongs to the MutH family.

It is found in the cytoplasm. Sequence-specific endonuclease that cleaves unmethylated GATC sequences. It is involved in DNA mismatch repair. The chain is DNA mismatch repair protein MutH from Shewanella baltica (strain OS185).